Reading from the N-terminus, the 819-residue chain is MSLSSAFRAVSNDPRIITWRIEKMELALVPLSAHGNFYEGDCYIVLSTRRVGSLLSQNIHFWIGKDSSQDEQSCAAIYTTQLDDYLGGSPVQHREVQYHESDTFRGYFKQGIIYKKGGVASGMKHVETNTYDVKRLLHVKGKRNIQATEVEMSWDSFNRGDVFLLDLGMVIIQWNGPESNSGERLKAMLLAKDIRDRERGGRAEIGVIEGDKEAASPGLMTVLQDTLGRRSMIKPAVSDEIMDQQQKSSIMLYHVSDTAGQLSVTEVATRPLVQDLLNHDDCYILDQSGTKIYVWKGKGATKVEKQAAMSKALDFIKMKGYPSSTNVETVNDGAESAMFKQLFQKWSVKDQTTGLGKIFSTGKIAKIFQDKFDVSLLHTKPEVAAQERMVDDGKGQVEVWRIENLELVPVEYQWHGFFYGGDCYLVLYTYDVNGKPHYILYIWQGRHASRDELAASAYRAVEVDQQFDGAPVQVRVSMGKEPRHFMAIFKGKLVIYEGGTSRKGNEEPDPPVRLFQIHGNDKSNTKAVEVSASASSLNSNDVFLLRTQAEHYLWYGKGSSGDERAMAKELVDLLCDGNADTVAEGQEPPEFWDLLGGKTAYANDKRLQQETLDVQVRLFECSNKTGRFLVTEVTDFTQEDLSPGDVMLLDTWDQVFLWIGAEANATEKKGALSTAQEYLVTHPSGRDPDTPILIIKQGFEPPTFTGWFLAWDPHIWSEGKSYEQLKNELGDATAIVRITADMKNATLYLNPSDGEPKYYPVEVLLKGQNQELPEDVDPAKKENYLSEQDFVSVFGITRGQFTALPGWKQLQLKKERGLF.

Residues 1-731 are core; that stretch reads MSLSSAFRAV…YEQLKNELGD (731 aa). The stretch at 24-73 is one Gelsolin-like 1 repeat; it reads MELALVPLSAHGNFYEGDCYIVLSTRRVGSLLSQNIHFWIGKDSSQDEQS. A Phosphotyrosine modification is found at Y85. A 1,2-diacyl-sn-glycero-3-phospho-(1D-myo-inositol-4,5-bisphosphate) is bound by residues 109 to 116 and 135 to 143; these read KQGIIYKK and RLLHVKGKR. Gelsolin-like repeat units lie at residues 145-185, 262-306, 403-454, 525-565, and 628-669; these read IQAT…GERL, LSVT…VEKQ, ENLE…DELA, TKAV…DERA, and FLVT…TEKK. The required for interaction with F-actin stretch occupies residues 628-819; that stretch reads FLVTEVTDFT…LQLKKERGLF (192 aa). Residues 732 to 819 form a headpiece region; the sequence is ATAIVRITAD…LQLKKERGLF (88 aa). Y748 and Y758 each carry phosphotyrosine. An HP domain is found at 753 to 819; it reads DGEPKYYPVE…LQLKKERGLF (67 aa).

Belongs to the villin/gelsolin family. As to quaternary structure, associates (via C-terminus) with actin. Interacts with F-actin. Interacts with SCARF1; the interaction occurs in embryonic dorsal root ganglions at 18 dpc and induces neurite-like outgrowth. Interacts with PLCE1. Interacts with ACTR2 and ACTR3; associates with the ARP2/3 complex. Most highly expressed in the endometrium of the uterus, the intestinal villi and the testes. Weaker expression also detected in the brain, dorsal root ganglions and on the surface of the tongue.

It localises to the cytoplasm. The protein localises to the cytoskeleton. Its subcellular location is the cell projection. It is found in the lamellipodium. The protein resides in the cell junction. It localises to the focal adhesion. The protein localises to the neuron projection. Its subcellular location is the axon. Its function is as follows. Ca(2+)-regulated actin-binding protein which plays an important role in actin bundling. May have a unique function in the morphogenesis of neuronal cells which form ganglia. Required for SREC1-mediated regulation of neurite-like outgrowth. Plays a role in regenerative sensory axon outgrowth and remodeling processes after peripheral injury in neonates. Involved in the formation of long fine actin-containing filopodia-like structures in fibroblast. Plays a role in ciliogenesis. In podocytes, controls lamellipodia formation through the regulation of EGF-induced diacylglycerol generation by PLCE1 and ARP2/3 complex assembly. In Mus musculus (Mouse), this protein is Advillin.